The primary structure comprises 218 residues: Cytochrome b6 (218 aa).

The chain crosses the membrane as a helical span at residues Ile-35–Phe-55. Residue Cys-38 participates in heme c binding. Heme b-binding residues include His-89 and His-103. 3 helical membrane-spanning segments follow: residues Ala-93–Phe-113, Leu-119–Tyr-139, and Leu-189–Ile-209. The heme b site is built by His-190 and His-205.

The protein belongs to the cytochrome b family. PetB subfamily. In terms of assembly, the 4 large subunits of the cytochrome b6-f complex are cytochrome b6, subunit IV (17 kDa polypeptide, PetD), cytochrome f and the Rieske protein, while the 4 small subunits are PetG, PetL, PetM and PetN. The complex functions as a dimer. Heme b is required as a cofactor. Requires heme c as cofactor.

Its subcellular location is the cellular thylakoid membrane. In terms of biological role, component of the cytochrome b6-f complex, which mediates electron transfer between photosystem II (PSII) and photosystem I (PSI), cyclic electron flow around PSI, and state transitions. This Synechococcus sp. (strain CC9902) protein is Cytochrome b6.